The primary structure comprises 278 residues: Probable CCR4-associated factor 1 homolog 5 (278 aa).

A divalent metal cation is bound by residues D30, E32, D145, and D217.

This sequence belongs to the CAF1 family. As to quaternary structure, component of the CCR4-NOT complex, at least composed of CRR4 and CAF1 proteins. It depends on a divalent metal cation as a cofactor.

The protein localises to the nucleus. It is found in the cytoplasm. It catalyses the reaction Exonucleolytic cleavage of poly(A) to 5'-AMP.. In terms of biological role, ubiquitous transcription factor required for a diverse set of processes. It is a component of the CCR4 complex involved in the control of gene expression. This is Probable CCR4-associated factor 1 homolog 5 (CAF1-5) from Arabidopsis thaliana (Mouse-ear cress).